Reading from the N-terminus, the 807-residue chain is 1,4-alpha-glucan branching enzyme GlgB (807 aa).

Catalysis depends on D405, which acts as the Nucleophile. E458 (proton donor) is an active-site residue.

This sequence belongs to the glycosyl hydrolase 13 family. GlgB subfamily. As to quaternary structure, monomer.

The catalysed reaction is Transfers a segment of a (1-&gt;4)-alpha-D-glucan chain to a primary hydroxy group in a similar glucan chain.. It participates in glycan biosynthesis; glycogen biosynthesis. In terms of biological role, catalyzes the formation of the alpha-1,6-glucosidic linkages in glycogen by scission of a 1,4-alpha-linked oligosaccharide from growing alpha-1,4-glucan chains and the subsequent attachment of the oligosaccharide to the alpha-1,6 position. This chain is 1,4-alpha-glucan branching enzyme GlgB, found in Histophilus somni (strain 129Pt) (Haemophilus somnus).